Consider the following 874-residue polypeptide: Probable inorganic carbon transporter subunit DabA (874 aa).

The Zn(2+) site is built by C398, D400, H580, and C595.

It belongs to the inorganic carbon transporter (TC 9.A.2) DabA family. In terms of assembly, forms a complex with DabB. The cofactor is Zn(2+).

The protein resides in the cell membrane. Its function is as follows. Part of an energy-coupled inorganic carbon pump. This chain is Probable inorganic carbon transporter subunit DabA, found in Bacillus anthracis (strain A0248).